The sequence spans 163 residues: MMRFTIIVIAFLLIIQSLEEEHILVYAHEGGEAGHKSLDYQGDQDSSTLHPKELFDAPRKVRFGRTTRAEKEQVTAMNNDSWSFKISGEHKQTNILADHDTTKNTFCKKMMIIVNDLTSLPTLEPSTSTNDMEKLARLLRDDYPIYSKPRRKPPVNNRAPDKF.

Residues 1-20 (MMRFTIIVIAFLLIIQSLEE) form the signal peptide. Positions 21–141 (EHILVYAHEG…MEKLARLLRD (121 aa)) are excised as a propeptide. At tyrosine 143 the chain carries Sulfotyrosine. The disordered stretch occupies residues 144–163 (PIYSKPRRKPPVNNRAPDKF). Hydroxyproline is present on proline 154. Positions 158–163 (RAPDKF) are excised as a propeptide.

This sequence belongs to the RGF family. As to quaternary structure, binds to LRR receptor-like serine/threonine-protein kinases RGI1, RGI2 and RGI3 to trigger their dimerization with SERK proteins and subsequent signaling. In terms of tissue distribution, expressed in roots, specifically in the root apical meristem (RAM).

The protein localises to the secreted. In terms of biological role, signaling peptide (root growth factor) required during root gravitropism in a PIN2-traffic dependent manner, thus influencing the formation of auxin gradients. Maintains the postembryonic root stem cell niche. The chain is Protein GOLVEN 3 from Arabidopsis thaliana (Mouse-ear cress).